Reading from the N-terminus, the 604-residue chain is ATP-dependent RNA helicase DED1 (604 aa).

A compositionally biased stretch (polar residues) spans 1–19 (MAELSEQVQNLSINDNNEN). A disordered region spans residues 1–55 (MAELSEQVQNLSINDNNENGYVPPHLRGKPRSARNNSSNYNNNNGGYNGGRGGGS). The residue at position 2 (Ala-2) is an N-acetylalanine. Residues 34 to 45 (RNNSSNYNNNNG) show a composition bias toward low complexity. Positions 46–55 (GYNGGRGGGS) are enriched in gly residues. Arg-51 carries the post-translational modification Omega-N-methylarginine. A Dimethylated arginine; alternate modification is found at Arg-62. The residue at position 62 (Arg-62) is an Omega-N-methylarginine; alternate. Residues 67-76 (NGGFFGGNNG) show a composition bias toward gly residues. The disordered stretch occupies residues 67–94 (NGGFFGGNNGGSRSNGRSGGRWIDGKHV). A Q motif motif is present at residues 142–170 (TEFTSPPLDGLLLENIKLARFTKPTPVQK). Lys-158 is covalently cross-linked (Glycyl lysine isopeptide (Lys-Gly) (interchain with G-Cter in ubiquitin)). The Helicase ATP-binding domain occupies 173–362 (VPIVANGRDL…RDFLSDYIFL (190 aa)). 186 to 193 (AQTGSGKT) is an ATP binding site. Ser-215, Ser-218, and Ser-263 each carry phosphoserine. A DEAD box motif is present at residues 306 to 309 (DEAD). The region spanning 373 to 533 (NITQKVLYVE…EVPSFLKDAM (161 aa)) is the Helicase C-terminal domain. Residues 533-604 (MMSAPGSRSN…SGGSNNSSWW (72 aa)) form a disordered region. Ser-535, Ser-539, and Ser-543 each carry phosphoserine. Dimethylated arginine; alternate is present on Arg-545. An Omega-N-methylarginine; alternate modification is found at Arg-545. Phosphoserine occurs at positions 572 and 576. An Omega-N-methylarginine modification is found at Arg-578. Residues 584–604 (GSDSKSSGWGNSGGSNNSSWW) are compositionally biased toward low complexity. Residue Ser-598 is modified to Phosphoserine.

The protein belongs to the DEAD box helicase family. DDX3/DED1 subfamily. Interacts with the L-A virus GAG protein and the whole L-A virus particles.

It is found in the cytoplasm. It carries out the reaction ATP + H2O = ADP + phosphate + H(+). ATP-binding RNA helicase involved in translation initiation. Remodels RNA in response to ADP and ATP concentrations by facilitating disruption, but also formation of RNA duplexes. Has weak ATP-dependent affinity for dsRNA, but strong ATP-dependent affinity for ssRNA. Acts as a virus host factor involved in the replication of the MBV and the L-A viruses by promoting the negative-strand RNA synthesis. May be involved in recognition of the preinitiation complex and DNA binding of the RNA polymerase III and play a role in mRNA splicing. In Saccharomyces cerevisiae (strain ATCC 204508 / S288c) (Baker's yeast), this protein is ATP-dependent RNA helicase DED1.